The primary structure comprises 68 residues: Copper transport protein ATOX1 (68 aa).

Residues 1-63 (MPKHEFSVDM…TLGKTGKAVS (63 aa)) enclose the HMA domain. Positions 12 and 15 each coordinate Cu cation. A Phosphoserine modification is found at S47. K60 is modified (N6-acetyllysine).

Belongs to the ATX1 family. As to quaternary structure, homodimer. Interacts with ATP7B. Interacts with ATP7A. Interacts (via dimer form) with SLC31A1 (via C-terminal domain); this interaction improves ATOX1 stability and controls intracellular Cu(I) levels.

Binds and deliver cytosolic copper to the copper ATPase proteins. May be important in cellular antioxidant defense. The protein is Copper transport protein ATOX1 of Bos taurus (Bovine).